The chain runs to 216 residues: ATP phosphoribosyltransferase (216 aa).

This sequence belongs to the ATP phosphoribosyltransferase family. Short subfamily. As to quaternary structure, heteromultimer composed of HisG and HisZ subunits.

The protein localises to the cytoplasm. It catalyses the reaction 1-(5-phospho-beta-D-ribosyl)-ATP + diphosphate = 5-phospho-alpha-D-ribose 1-diphosphate + ATP. The protein operates within amino-acid biosynthesis; L-histidine biosynthesis; L-histidine from 5-phospho-alpha-D-ribose 1-diphosphate: step 1/9. Its function is as follows. Catalyzes the condensation of ATP and 5-phosphoribose 1-diphosphate to form N'-(5'-phosphoribosyl)-ATP (PR-ATP). Has a crucial role in the pathway because the rate of histidine biosynthesis seems to be controlled primarily by regulation of HisG enzymatic activity. The chain is ATP phosphoribosyltransferase from Chromohalobacter salexigens (strain ATCC BAA-138 / DSM 3043 / CIP 106854 / NCIMB 13768 / 1H11).